Here is a 236-residue protein sequence, read N- to C-terminus: Small ribosomal subunit protein uS2c (236 aa).

It belongs to the universal ribosomal protein uS2 family.

The protein localises to the plastid. It is found in the chloroplast. The sequence is that of Small ribosomal subunit protein uS2c (rps2) from Morus indica (Mulberry).